Here is a 121-residue protein sequence, read N- to C-terminus: Large ribosomal subunit protein uL24 (121 aa).

The interval 1-30 (MVRIVSKQPRKQRKARYNAPNHTRGRFLSA) is disordered.

The protein belongs to the universal ribosomal protein uL24 family. Part of the 50S ribosomal subunit.

In terms of biological role, one of two assembly initiator proteins, it binds directly to the 5'-end of the 23S rRNA, where it nucleates assembly of the 50S subunit. Functionally, located at the polypeptide exit tunnel on the outside of the subunit. This is Large ribosomal subunit protein uL24 from Methanoculleus marisnigri (strain ATCC 35101 / DSM 1498 / JR1).